The chain runs to 501 residues: Serine/threonine-protein kinase pelle (501 aa).

The tract at residues 1-25 is disordered; that stretch reads MSGVQTAEAEAQAQNQANGNRTRSR. Positions 7-18 are enriched in low complexity; the sequence is AEAEAQAQNQAN. The Death domain occupies 55–121; it reads WQQLATAVKL…NAMRLIKDYV (67 aa). Positions 144–176 are disordered; that stretch reads DSSAKVNNGPPFPSSSGVSNSNNNRTSTTATEE. Residues 149 to 167 are compositionally biased toward low complexity; sequence VNNGPPFPSSSGVSNSNNN. In terms of domain architecture, Protein kinase spans 213–499; sequence WSPDNRLGQG…AVLKRFEPFV (287 aa). ATP contacts are provided by residues 219-227 and Lys-240; that span reads LGQGGFGDV. Asp-346 functions as the Proton acceptor in the catalytic mechanism. ATP-binding positions include 348–351 and Asp-364; that span reads KPAN.

Belongs to the protein kinase superfamily. TKL Ser/Thr protein kinase family. Pelle subfamily. Interacts (via Death domain) with tub (via Death domain). Interacts with Pellino (Pli).

Its subcellular location is the cell membrane. It is found in the cytoplasm. The catalysed reaction is L-seryl-[protein] + ATP = O-phospho-L-seryl-[protein] + ADP + H(+). It carries out the reaction L-threonyl-[protein] + ATP = O-phospho-L-threonyl-[protein] + ADP + H(+). Functionally, plays an essential role in the Tl receptor signaling pathway that establishes embryonic dorsoventral polarity; the signal directs import of dl into ventral and ventrolateral nuclei, thereby establishing dorsoventral polarity. Tub recruits pll to the plasma membrane and protein-protein interaction activates pll. This Drosophila melanogaster (Fruit fly) protein is Serine/threonine-protein kinase pelle (pll).